Consider the following 321-residue polypeptide: NADPH-dependent codeinone reductase 1-4 (321 aa).

The NADPH site is built by Thr27 and Asp51. Residues Tyr56 and His119 each act as proton donor in the active site. His119 provides a ligand contact to substrate. NADPH is bound by residues Ser165, Gln187, Ser214, Leu216, Ser264, and Arg269. A disordered region spans residues 299 to 321; that stretch reads SADFLLSPTGPFKTEEEFWDEKD.

This sequence belongs to the aldo/keto reductase family. In terms of tissue distribution, latex secreting cells (laticifer cells). Expressed constitutively in all organs with highest levels in capsules. Restricted to the parietal region of sieve elements adjacent or proximal to laticifers in roots, stems, leaves and carpels.

The protein resides in the cytoplasm. It localises to the cytosol. It catalyses the reaction codeine + NADP(+) = codeinone + NADPH + H(+). The enzyme catalyses neopine + NADP(+) = neopinone + NADPH + H(+). The catalysed reaction is morphine + NADP(+) = morphinone + NADPH + H(+). It carries out the reaction neomorphine + NADP(+) = neomorphinone + NADPH + H(+). It participates in alkaloid biosynthesis; morphine biosynthesis. In terms of biological role, NADPH-dependent codeinone reductase involved in biosynthesis of morphinan-type benzylisoquinoline and opiate alkaloids natural products. Reduces codeinone to codeine in the penultimate step in morphine biosynthesis. Can use morphinone, hydrocodone and hydromorphone as substrate during reductive reaction with NADPH as cofactor, and morphine and dihydrocodeine as substrate during oxidative reaction with NADP as cofactor. Converts morphinone to morphine, and neomorphinone to neomorphine. Reduces irreversibly neopinone, a spontaneous isomer of codeinone, to neopine; in planta, neopine levels are limited to low levels. In Papaver somniferum (Opium poppy), this protein is NADPH-dependent codeinone reductase 1-4.